The primary structure comprises 531 residues: Peptide chain release factor 3 (531 aa).

One can recognise a tr-type G domain in the interval 13 to 282 (SKRRTFAIIS…GLTQWAPSPM (270 aa)). Residues 22 to 29 (SHPDAGKT), 90 to 94 (DTPGH), and 144 to 147 (NKLD) each bind GTP.

This sequence belongs to the TRAFAC class translation factor GTPase superfamily. Classic translation factor GTPase family. PrfC subfamily.

It localises to the cytoplasm. In terms of biological role, increases the formation of ribosomal termination complexes and stimulates activities of RF-1 and RF-2. It binds guanine nucleotides and has strong preference for UGA stop codons. It may interact directly with the ribosome. The stimulation of RF-1 and RF-2 is significantly reduced by GTP and GDP, but not by GMP. This is Peptide chain release factor 3 from Vibrio cholerae serotype O1 (strain ATCC 39541 / Classical Ogawa 395 / O395).